The sequence spans 226 residues: 2,3-bisphosphoglycerate-dependent phosphoglycerate mutase (226 aa).

Residues 8–15 (RHGQSQWN), 21–22 (TG), arginine 58, 112–115 (ERMY), lysine 123, 139–140 (RR), and 183–184 (GN) each bind substrate. Histidine 9 functions as the Tele-phosphohistidine intermediate in the catalytic mechanism. Glutamate 112 serves as the catalytic Proton donor/acceptor.

This sequence belongs to the phosphoglycerate mutase family. BPG-dependent PGAM subfamily.

It catalyses the reaction (2R)-2-phosphoglycerate = (2R)-3-phosphoglycerate. It participates in carbohydrate degradation; glycolysis; pyruvate from D-glyceraldehyde 3-phosphate: step 3/5. Catalyzes the interconversion of 2-phosphoglycerate and 3-phosphoglycerate. This is 2,3-bisphosphoglycerate-dependent phosphoglycerate mutase from Protochlamydia amoebophila (strain UWE25).